A 503-amino-acid chain; its full sequence is Endoglycoceramidase (503 aa).

An N-terminal signal peptide occupies residues 1–21 (MAETQPLVFVLMSISAILTAG). 3 N-linked (GlcNAc...) asparagine glycosylation sites follow: asparagine 72, asparagine 108, and asparagine 205. Residue glutamate 239 is the Proton donor of the active site. 3 N-linked (GlcNAc...) asparagine glycosylation sites follow: asparagine 307, asparagine 409, and asparagine 485.

It belongs to the glycosyl hydrolase 5 (cellulase A) family.

It localises to the secreted. The protein localises to the nematocyst. It carries out the reaction an oligoglycosyl-(1-&gt;4)-beta-D-glucosyl-(1&lt;-&gt;1)-ceramide + H2O = an oligoglycosyl-(1-&gt;4)-D-glucose + an N-acyl-sphingoid base. Completely inhibited by Hg(2+). Cu(2+) and zinc have no effect on enzyme activity. Lithium, potassium, manganese, Ni(2+), calcium, magnesium and EDTA have no significant effect on enzyme activity. Enzyme requires presence of detergents such as Triton X-100 and Lubrol PX for the hydrolysis of glycosphingolipids. Taurodeoxycholate strongly inhibits the enzyme activity and SDS completely inhibits the enzyme activity. In terms of biological role, hydrolysis of the glycosidic linkage between oligosaccharides and ceramides of glycosphingolipids, especially b-series polysialogangliosides. This is Endoglycoceramidase from Cyanea nozakii (Jellyfish).